The primary structure comprises 448 residues: Nicotinate phosphoribosyltransferase pncB1 (448 aa).

A disordered region spans residues 1 to 21 (MGPPPAARRREGEPDNQDPAG). Position 212 is a phosphohistidine (His-212). The interval 353-372 (RSSYKESPGGRKEALRRSRA) is disordered.

Belongs to the NAPRTase family. Transiently phosphorylated on a His residue during the reaction cycle. Phosphorylation strongly increases the affinity for substrates and increases the rate of nicotinate D-ribonucleotide production. Dephosphorylation regenerates the low-affinity form of the enzyme, leading to product release.

It catalyses the reaction nicotinate + 5-phospho-alpha-D-ribose 1-diphosphate + ATP + H2O = nicotinate beta-D-ribonucleotide + ADP + phosphate + diphosphate. It participates in cofactor biosynthesis; NAD(+) biosynthesis; nicotinate D-ribonucleotide from nicotinate: step 1/1. Its function is as follows. Involved in the Preiss-Handler pathway, which is a recycling route that permits the salvage of free nicotinamide (NM) and nicotinic acid (Na) involved in the NAD biosynthesis. Catalyzes the synthesis of beta-nicotinate D-ribonucleotide from nicotinate and 5-phospho-D-ribose 1-phosphate at the expense of ATP. It is not able to use nicotinamide. PncB1 contributes to basal NAD level. The sequence is that of Nicotinate phosphoribosyltransferase pncB1 (pncB1) from Mycobacterium tuberculosis (strain ATCC 25618 / H37Rv).